Consider the following 218-residue polypeptide: Glutathione S-transferase Y1 (218 aa).

Positions 2 to 88 constitute a GST N-terminal domain; it reads PMILGYWNVR…YIARKHNLCG (87 aa). Residues 7–8, 46–50, 59–60, and 72–73 each bind glutathione; these read YW, WLNEK, NL, and QS. The GST C-terminal domain maps to 90-208; it reads TEEERIRVDI…KTSRFLRRPI (119 aa). Tyrosine 116 contacts substrate.

This sequence belongs to the GST superfamily. Mu family. Homodimer.

It is found in the cytoplasm. It carries out the reaction RX + glutathione = an S-substituted glutathione + a halide anion + H(+). In terms of biological role, conjugation of reduced glutathione to a wide number of exogenous and endogenous hydrophobic electrophiles. This Cricetulus longicaudatus (Long-tailed dwarf hamster) protein is Glutathione S-transferase Y1.